We begin with the raw amino-acid sequence, 198 residues long: Large ribosomal subunit protein bL25 (198 aa).

The protein belongs to the bacterial ribosomal protein bL25 family. CTC subfamily. As to quaternary structure, part of the 50S ribosomal subunit; part of the 5S rRNA/L5/L18/L25 subcomplex. Contacts the 5S rRNA. Binds to the 5S rRNA independently of L5 and L18.

This is one of the proteins that binds to the 5S RNA in the ribosome where it forms part of the central protuberance. The chain is Large ribosomal subunit protein bL25 from Phocaeicola vulgatus (strain ATCC 8482 / DSM 1447 / JCM 5826 / CCUG 4940 / NBRC 14291 / NCTC 11154) (Bacteroides vulgatus).